A 490-amino-acid chain; its full sequence is Glutamyl-tRNA(Gln) amidotransferase subunit A (490 aa).

Catalysis depends on charge relay system residues K80 and S155. S179 acts as the Acyl-ester intermediate in catalysis.

The protein belongs to the amidase family. GatA subfamily. In terms of assembly, heterotrimer of A, B and C subunits.

It carries out the reaction L-glutamyl-tRNA(Gln) + L-glutamine + ATP + H2O = L-glutaminyl-tRNA(Gln) + L-glutamate + ADP + phosphate + H(+). Its function is as follows. Allows the formation of correctly charged Gln-tRNA(Gln) through the transamidation of misacylated Glu-tRNA(Gln) in organisms which lack glutaminyl-tRNA synthetase. The reaction takes place in the presence of glutamine and ATP through an activated gamma-phospho-Glu-tRNA(Gln). The polypeptide is Glutamyl-tRNA(Gln) amidotransferase subunit A (Brevibacillus brevis (strain 47 / JCM 6285 / NBRC 100599)).